A 652-amino-acid chain; its full sequence is DNA ligase (652 aa).

NAD(+) is bound by residues 29-33 (DAEYD), 78-79 (SL), and E107. The active-site N6-AMP-lysine intermediate is the K109. 4 residues coordinate NAD(+): R130, E164, K278, and K302. The Zn(2+) site is built by C395, C398, C413, and C418. Residues 577–652 (DENAALSGMT…IKDEAWLESL (76 aa)) enclose the BRCT domain.

This sequence belongs to the NAD-dependent DNA ligase family. LigA subfamily. Mg(2+) serves as cofactor. It depends on Mn(2+) as a cofactor.

The catalysed reaction is NAD(+) + (deoxyribonucleotide)n-3'-hydroxyl + 5'-phospho-(deoxyribonucleotide)m = (deoxyribonucleotide)n+m + AMP + beta-nicotinamide D-nucleotide.. In terms of biological role, DNA ligase that catalyzes the formation of phosphodiester linkages between 5'-phosphoryl and 3'-hydroxyl groups in double-stranded DNA using NAD as a coenzyme and as the energy source for the reaction. It is essential for DNA replication and repair of damaged DNA. This chain is DNA ligase, found in Streptococcus suis (strain 05ZYH33).